Here is a 20-residue protein sequence, read N- to C-terminus: Pregnancy-associated glycoprotein 73B (20 aa).

Belongs to the peptidase A1 family. N-glycosylated. In terms of tissue distribution, expressed in chorionic epithelium (trophectoderm).

It localises to the secreted. The protein resides in the extracellular space. This is Pregnancy-associated glycoprotein 73B from Bubalus bubalis (Domestic water buffalo).